Consider the following 83-residue polypeptide: Hainantoxin-III 12 (83 aa).

A signal peptide spans 1-21 (MKASMFLALAGLVLLFVVGYA). The propeptide occupies 22 to 48 (SGSEEKEFPRELLSKIFAVDDFKGEER). 3 disulfide bridges follow: cysteine 50–cysteine 65, cysteine 57–cysteine 70, and cysteine 64–cysteine 77. At leucine 81 the chain carries Leucine amide.

The protein belongs to the neurotoxin 10 (Hwtx-1) family. 15 (Hntx-3) subfamily. Monomer. In terms of tissue distribution, expressed by the venom gland.

The protein resides in the secreted. Functionally, selective antagonist of neuronal tetrodotoxin (TTX)-sensitive voltage-gated sodium channels (IC(50)=1270 nM on Nav1.1/SCN1A, 270 nM on Nav1.2/SCN2A, 491 nM on Nav1.3/SCN3A and 232 nM on Nav1.7/SCN9A). This toxin suppress Nav1.7 current amplitude without significantly altering the activation, inactivation, and repriming kinetics. Short extreme depolarizations partially activate the toxin-bound channel, indicating voltage-dependent inhibition of this toxin. This toxin increases the deactivation of the Nav1.7 current after extreme depolarizations. The toxin-Nav1.7 complex is gradually dissociated upon prolonged strong depolarizations in a voltage-dependent manner, and the unbound toxin rebinds to Nav1.7 after a long repolarization. Moreover, analysis of chimeric channels showed that the DIIS3-S4 linker is critical for toxin binding to Nav1.7. These data are consistent with this toxin interacting with Nav1.7 site 4 and trapping the domain II voltage sensor in the closed state. In Cyriopagopus hainanus (Chinese bird spider), this protein is Hainantoxin-III 12.